A 207-amino-acid polypeptide reads, in one-letter code: NKYCNIKCSKVAHTVCQYGESTKPSSKNCNKVSITSVGVTEEEKKLIVDEHNRFRQKVAQGLETRGNPGPQPAASDMNNLVWNDELAYIAQVWANQCQFFVHDKCRNTAQYQVGQNIAYSASTAAYPGIVSLIVLWENEVKDFNYSQGITKENFAKVGHYTQVVWAKTKEVGCGSIKYIEKGMKSHYLVCNYGPAGNYMGQPIYTKK.

Cystine bridges form between cysteine 4–cysteine 16, cysteine 8–cysteine 105, cysteine 29–cysteine 97, and cysteine 173–cysteine 190. Positions 48-192 constitute an SCP domain; that stretch reads VDEHNRFRQK…MKSHYLVCNY (145 aa).

This sequence belongs to the CRISP family. Venom allergen 5-like subfamily. As to quaternary structure, monomer. As to expression, expressed by the venom gland.

It localises to the secreted. This Polybia scutellaris rioplatensis (Camoati) protein is Venom allergen 5.